A 473-amino-acid polypeptide reads, in one-letter code: Photosystem II CP43 reaction center protein (473 aa).

Residues 1-14 (MKILYSPRRFYPVE) constitute a propeptide that is removed on maturation. Threonine 15 carries the post-translational modification N-acetylthreonine. Position 15 is a phosphothreonine (threonine 15). 5 consecutive transmembrane segments (helical) span residues 69–93 (LFEVAHFVSEKPMYEQGLILLPHLA), 134–155 (LIGPETLEESFPFFGYTWKDKN), 178–200 (KALYFGGLYDTWAPGGGDVREIT), 255–275 (KPFAWARRAFVWSGEAYLSYS), and 291–312 (WFNNTAYPSEFYGPTGPEASQA). Glutamate 367 is a binding site for [CaMn4O5] cluster. Residues 447 to 471 (RARAAAAGFEKGIDRDTEPVLSMTP) traverse the membrane as a helical segment.

It belongs to the PsbB/PsbC family. PsbC subfamily. As to quaternary structure, PSII is composed of 1 copy each of membrane proteins PsbA, PsbB, PsbC, PsbD, PsbE, PsbF, PsbH, PsbI, PsbJ, PsbK, PsbL, PsbM, PsbT, PsbX, PsbY, PsbZ, Psb30/Ycf12, at least 3 peripheral proteins of the oxygen-evolving complex and a large number of cofactors. It forms dimeric complexes. Binds multiple chlorophylls and provides some of the ligands for the Ca-4Mn-5O cluster of the oxygen-evolving complex. It may also provide a ligand for a Cl- that is required for oxygen evolution. PSII binds additional chlorophylls, carotenoids and specific lipids. is required as a cofactor.

It is found in the plastid. It localises to the chloroplast thylakoid membrane. Its function is as follows. One of the components of the core complex of photosystem II (PSII). It binds chlorophyll and helps catalyze the primary light-induced photochemical processes of PSII. PSII is a light-driven water:plastoquinone oxidoreductase, using light energy to abstract electrons from H(2)O, generating O(2) and a proton gradient subsequently used for ATP formation. The polypeptide is Photosystem II CP43 reaction center protein (Adiantum capillus-veneris (Maidenhair fern)).